The following is a 595-amino-acid chain: MEFELEDITIEQSSFTNNNSNNNNNNNNNSNSNNNNNNNNNNINNNNNHNNNNKNNSNNKNEINNQLDIPISNLVVDKENISKKYFCTICSDLLVNSFHADKFKAVQCKNGHYTTCLNCWEKHLEKKKNCIQCGVDVESIESLSSNLLVTQKFTTFKIHCPNSFFDTIDFIKDEVNGCKEIIQINELEEHLKECQYGFISCKNCEEFSKLPFQEFTQCPDFRKNTKEQHDLICPYVKISCEYCGDIINKINKESHNANWCQEITIKCLDCHLPFKKKEINQHQKSFCPETIIQCRYSKGGCNAMIRRSKLSQHLTEGDNHHQFISNILNQQDLKINELELKNTEFCLLLNGQNKKITELEILFKELNDSILIQKQQQKQQQQQQQQQQQQQQQQQQQQQSQQQQSQQQQQSQQQQQSQQSQQNNNSNSHFINNNNNNINNVQMSDSPNGGSLPQAVYKNKWVISNYSEQEQQGISKDYIKSPLFKIGNSTFFLKWFPFGKKKLNYCSIFLYKTQDDKSIIVNYYIHLVNNQISDEVYEKRGCQKYDSENGSAGYGSSQFIKRADLLNDANGFLINDSITIEIEIFATEEILPLQS.

Residues 14 to 64 (SFTNNNSNNNNNNNNNSNSNNNNNNNNNNINNNNNHNNNNKNNSNNKNEIN) form a disordered region. A compositionally biased stretch (low complexity) spans 17-64 (NNNSNNNNNNNNNSNSNNNNNNNNNNINNNNNHNNNNKNNSNNKNEIN). Residues 87-134 (CTICSDLLVNSFHADKFKAVQCKNGHYTTCLNCWEKHLEKKKNCIQCG) form an RING-type; degenerate zinc finger. 2 consecutive TRAF-type zinc fingers follow at residues 189–253 (EHLK…INKE) and 254–311 (SHNA…SKLS). Residues 348 to 410 (LLNGQNKKIT…QQQQSQQQQQ (63 aa)) adopt a coiled-coil conformation. A compositionally biased stretch (low complexity) spans 409-440 (QQSQQQQQSQQSQQNNNSNSHFINNNNNNINN). The interval 409-450 (QQSQQQQQSQQSQQNNNSNSHFINNNNNNINNVQMSDSPNGG) is disordered. Positions 441–450 (VQMSDSPNGG) are enriched in polar residues. Positions 456–584 (VYKNKWVISN…NDSITIEIEI (129 aa)) constitute an MATH domain.

The protein belongs to the TNF receptor-associated factor family. A subfamily.

The protein localises to the cytoplasm. Functionally, probable adapter protein and signal transducer that links members of the tumor necrosis factor receptor family to different signaling pathways by association with the receptor cytoplasmic domain and kinases. The protein is TNF receptor-associated factor family protein DDB_G0272348 of Dictyostelium discoideum (Social amoeba).